A 27-amino-acid polypeptide reads, in one-letter code: Trypsin inhibitor 5 (27 aa).

3 disulfide bridges follow: C1–C18, C8–C20, and C14–C26.

It localises to the secreted. Inhibits trypsin. This Sechium edule (Chayote) protein is Trypsin inhibitor 5.